The primary structure comprises 213 residues: Putative manganese efflux pump MntP (213 aa).

The next 6 helical transmembrane spans lie at 3–23 (ILSI…VSVA), 36–56 (ALKV…IGWG), 67–87 (AFDH…MIFE), 130–150 (LAIA…FLGI), 152–172 (IVQT…LGVI), and 187–207 (IVGG…HTGI).

The protein belongs to the MntP (TC 9.B.29) family.

The protein localises to the cell membrane. Probably functions as a manganese efflux pump. The chain is Putative manganese efflux pump MntP from Clostridium perfringens (strain SM101 / Type A).